The primary structure comprises 126 residues: Methylglyoxal synthase (126 aa).

Residues 1–126 (MEKKIALIAH…LIKGLESLIF (126 aa)) enclose the MGS-like domain. Substrate contacts are provided by residues histidine 10, lysine 14, 36-39 (TGTT), and 56-57 (SG). Catalysis depends on aspartate 62, which acts as the Proton donor/acceptor. Histidine 89 contacts substrate.

This sequence belongs to the methylglyoxal synthase family.

It carries out the reaction dihydroxyacetone phosphate = methylglyoxal + phosphate. Catalyzes the formation of methylglyoxal from dihydroxyacetone phosphate. In Borreliella burgdorferi (strain ATCC 35210 / DSM 4680 / CIP 102532 / B31) (Borrelia burgdorferi), this protein is Methylglyoxal synthase.